The chain runs to 372 residues: Citrate/2-methylcitrate synthase (372 aa).

Histidine 188 is a substrate binding site. Residue histidine 223 is part of the active site. 256–260 (KIMGF) provides a ligand contact to CoA. Histidine 262 is a catalytic residue. Arginine 272 contacts substrate. Aspartate 314 is an active-site residue. Substrate contacts are provided by arginine 339 and arginine 358.

This sequence belongs to the citrate synthase family.

The enzyme catalyses propanoyl-CoA + oxaloacetate + H2O = 2-methylcitrate + CoA + H(+). The catalysed reaction is oxaloacetate + acetyl-CoA + H2O = citrate + CoA + H(+). Its pathway is carbohydrate metabolism; tricarboxylic acid cycle; isocitrate from oxaloacetate: step 1/2. Involved in both the tricarboxylic acid (TCA) and methylcitric acid cycles. Has both 2-methylcitrate synthase and citrate synthase activities. Catalyzes the condensation of propionyl-CoA and oxaloacetate to yield 2-methylcitrate (2-MC) and CoA, and the condensation of acetyl-CoA and oxaloacetate to yield citrate and CoA. Has 2.3-fold higher activity as a 2-methylcitrate synthase. Catalyzes the formation of either (2S,3R)- or (2R,3S)-2-methylcitrate. The sequence is that of Citrate/2-methylcitrate synthase from Bacillus subtilis (strain 168).